The primary structure comprises 242 residues: MDVIYRSGTKLIWSSSMNDDRQTSSEDKLKGFEWWRRSLQYRTGLGLDEEEKLQFEHDYRVKNLPQKCDSCIEYRDWMFKYSPSVKFMMEHVQKLGGNLSSKNITCDMCDGMKGGGFHPEMGILLCSNWIKDKWQLEDILTHELVHAYDHLKFKVDLTNLKHHACTEIRASALSGECRILNEIKKTGLGDFGSKFQACVRRRAAISVSANPNCSSKEEAESVVNAVWESCFNDTRPFERVYR.

Position 142 (His142) interacts with a divalent metal cation. Glu143 is a catalytic residue. Position 146 (His146) interacts with a divalent metal cation.

This sequence belongs to the peptidase M76 family.

The protein localises to the mitochondrion inner membrane. Has a dual role in the assembly of mitochondrial ATPase. Acts as a protease that removes N-terminal residues of mitochondrial ATPase CF(0) subunit 6 at the intermembrane space side. Also involved in the correct assembly of the membrane-embedded ATPase CF(0) particle, probably mediating association of subunit 6 with the subunit 9 ring. The polypeptide is Mitochondrial inner membrane protease ATP23 (ATP23) (Meyerozyma guilliermondii (strain ATCC 6260 / CBS 566 / DSM 6381 / JCM 1539 / NBRC 10279 / NRRL Y-324) (Yeast)).